A 207-amino-acid chain; its full sequence is Large ribosomal subunit protein uL4 (207 aa).

The disordered stretch occupies residues 52–75 (KNRSAVRGGGKKPWRQKGTGRARQ). Basic residues predominate over residues 60–71 (GGKKPWRQKGTG).

This sequence belongs to the universal ribosomal protein uL4 family. Part of the 50S ribosomal subunit.

Functionally, one of the primary rRNA binding proteins, this protein initially binds near the 5'-end of the 23S rRNA. It is important during the early stages of 50S assembly. It makes multiple contacts with different domains of the 23S rRNA in the assembled 50S subunit and ribosome. Its function is as follows. Forms part of the polypeptide exit tunnel. The polypeptide is Large ribosomal subunit protein uL4 (Limosilactobacillus fermentum (strain NBRC 3956 / LMG 18251) (Lactobacillus fermentum)).